A 331-amino-acid polypeptide reads, in one-letter code: Probable serine hydrolase (331 aa).

The interval 1 to 28 is disordered; sequence MGQTRVAATTAAQSPAAELSPETNGQTE. Residues 7-17 are compositionally biased toward low complexity; the sequence is AATTAAQSPAA. Positions 63–163 constitute an AB hydrolase-1 domain; it reads PIIALHGWQD…EVEKLINIDI (101 aa). The active site involves serine 138.

Belongs to the AB hydrolase superfamily. As to expression, ubiquitously expressed before embryonic stage 11. At stage 11, expression is concentrated in the foregut and posterior midgut. By stage 15, in gastric caeca, pharynx, posterior spiracles and anterior edge of midgut. At the end of embryogenesis, expression is confined to gastric caeca. During third instar larvae, expressed at low levels in gastric caeca, midgut and hindgut and high level in fat body.

Functionally, may have a role in detoxification and digestion during embryogenesis and larval development. This is Probable serine hydrolase (kraken) from Drosophila melanogaster (Fruit fly).